The primary structure comprises 378 residues: Transmembrane 6 superfamily member 2 (378 aa).

The next 9 membrane-spanning stretches (helical) occupy residues 34–54 (LCVV…VYSL), 63–83 (PLYA…VIAL), 110–130 (IFIC…MAGA), 140–160 (LGLY…PGNI), 170–190 (PTFF…MRIF), 219–239 (LTLI…GLVV), 269–289 (MLMY…ALTF), 291–311 (GCSW…QAQF), and 332–352 (TWAT…LLAL). EXPERA domains lie at 61 to 186 (YDPL…CWAG) and 217 to 351 (ADLT…HLLA).

This sequence belongs to the TM6SF family.

The protein resides in the endoplasmic reticulum membrane. It localises to the endoplasmic reticulum-Golgi intermediate compartment membrane. Regulator of liver fat metabolism influencing triglyceride secretion and hepatic lipid droplet content. May function as sterol isomerase. The chain is Transmembrane 6 superfamily member 2 (Tm6sf2) from Rattus norvegicus (Rat).